Here is a 307-residue protein sequence, read N- to C-terminus: D-alanine--D-alanine ligase (307 aa).

The 190-residue stretch at 110–299 (KQLWKGAGLP…FDVLVGEILL (190 aa)) folds into the ATP-grasp domain. 136-185 (PVIVKPAHEGSSIGMAKADNTEELGEALVAAEKFDQDVLVEAWVNGPEYT) lines the ATP pocket. Mg(2+) is bound by residues aspartate 253, glutamate 266, and asparagine 268.

The protein belongs to the D-alanine--D-alanine ligase family. Mg(2+) serves as cofactor. Mn(2+) is required as a cofactor.

Its subcellular location is the cytoplasm. It catalyses the reaction 2 D-alanine + ATP = D-alanyl-D-alanine + ADP + phosphate + H(+). The protein operates within cell wall biogenesis; peptidoglycan biosynthesis. In terms of biological role, cell wall formation. In Alcanivorax borkumensis (strain ATCC 700651 / DSM 11573 / NCIMB 13689 / SK2), this protein is D-alanine--D-alanine ligase.